A 217-amino-acid polypeptide reads, in one-letter code: Cytidylate kinase (217 aa).

9–17 (GPSSSGKSS) serves as a coordination point for ATP.

It belongs to the cytidylate kinase family. Type 1 subfamily.

It localises to the cytoplasm. The enzyme catalyses CMP + ATP = CDP + ADP. It carries out the reaction dCMP + ATP = dCDP + ADP. This is Cytidylate kinase from Mycoplasma pneumoniae (strain ATCC 29342 / M129 / Subtype 1) (Mycoplasmoides pneumoniae).